The primary structure comprises 474 residues: Methylenetetrahydrofolate--tRNA-(uracil-5-)-methyltransferase TrmFO (474 aa).

9–14 (GGGLAG) lines the FAD pocket. The segment at 425–451 (PPLERMPRNETGKRLRGPEKAALKKRA) is disordered. Over residues 429–451 (RMPRNETGKRLRGPEKAALKKRA) the composition is skewed to basic and acidic residues.

The protein belongs to the MnmG family. TrmFO subfamily. FAD is required as a cofactor.

It is found in the cytoplasm. The enzyme catalyses uridine(54) in tRNA + (6R)-5,10-methylene-5,6,7,8-tetrahydrofolate + NADH + H(+) = 5-methyluridine(54) in tRNA + (6S)-5,6,7,8-tetrahydrofolate + NAD(+). It carries out the reaction uridine(54) in tRNA + (6R)-5,10-methylene-5,6,7,8-tetrahydrofolate + NADPH + H(+) = 5-methyluridine(54) in tRNA + (6S)-5,6,7,8-tetrahydrofolate + NADP(+). In terms of biological role, catalyzes the folate-dependent formation of 5-methyl-uridine at position 54 (M-5-U54) in all tRNAs. This Methylorubrum populi (strain ATCC BAA-705 / NCIMB 13946 / BJ001) (Methylobacterium populi) protein is Methylenetetrahydrofolate--tRNA-(uracil-5-)-methyltransferase TrmFO.